The primary structure comprises 131 residues: Profilin-1 (131 aa).

A disulfide bond links cysteine 13 and cysteine 115. An Involved in PIP2 interaction motif is present at residues 81-97; it reads RVIRGKKGAGGITIKKT. At threonine 111 the chain carries Phosphothreonine.

The protein belongs to the profilin family. As to quaternary structure, occurs in many kinds of cells as a complex with monomeric actin in a 1:1 ratio.

The protein resides in the cytoplasm. The protein localises to the cytoskeleton. Its function is as follows. Binds to actin and affects the structure of the cytoskeleton. At high concentrations, profilin prevents the polymerization of actin, whereas it enhances it at low concentrations. By binding to PIP2, it inhibits the formation of IP3 and DG. The sequence is that of Profilin-1 (PRO1) from Phleum pratense (Common timothy).